The chain runs to 98 residues: uncharacterized protein (98 aa).

2 consecutive transmembrane segments (helical) span residues 8–28 (LILK…HYFL) and 73–93 (LWFI…SISL).

It is found in the membrane. This is an uncharacterized protein from Saccharomyces cerevisiae (strain ATCC 204508 / S288c) (Baker's yeast).